A 537-amino-acid polypeptide reads, in one-letter code: MEFRMSKTSPSHFFNYSASKKLQELAKHPLDLTKELTPERVTQYVAEAGGFKLLYGTERVTNDVLAALKQLSEESHALDKMNRMQDGEVMNFIERFPSENRPALHTATRDLFDYPRTAKKAQEAAQLAKAELEKLRQFLEKNDQNYHFTDLVTVAIGGSDLGPRAHYHALEHLLKPGHHVHFISNVDPDDVAGVFRKIPDLKRTLVAVVSKSGTTLETATNEELVREKFRQAGLDPKKHFVSITMPGTPMDNQEQYLKTFYMWDWIGGRYSTTSMCGALMLSFAFGINTFWEFLKGAHEMDRIALETNLNKNLPLLAALLGIWNRNFLDYPTVALIPYSQALLRYTAHIQQVDMESNGKHIDQQGIMTNFHTGPIIWGEPGTNSQHSFFQLIHQGTATVPVSIIAFKENLYGEDLEFQGTTSQEKLLSNLFAQSLALATGQISENPNKTFLGNRPTNILLAKKLTPYTLGALLSFFENKVAFQGFIWGINSFDQEGVQLGKVLANRLINEFANQRKKTKPSSFAIGEAYLKHLDHFS.

The Proton donor role is filled by Glu355. Residues His386 and Lys501 contribute to the active site.

This sequence belongs to the GPI family.

The protein localises to the cytoplasm. It carries out the reaction alpha-D-glucose 6-phosphate = beta-D-fructose 6-phosphate. It participates in carbohydrate biosynthesis; gluconeogenesis. Its pathway is carbohydrate degradation; glycolysis; D-glyceraldehyde 3-phosphate and glycerone phosphate from D-glucose: step 2/4. In terms of biological role, catalyzes the reversible isomerization of glucose-6-phosphate to fructose-6-phosphate. This is Glucose-6-phosphate isomerase from Protochlamydia amoebophila (strain UWE25).